Consider the following 783-residue polypeptide: Probable phosphoketolase (783 aa).

It belongs to the XFP family. Thiamine diphosphate serves as cofactor.

The chain is Probable phosphoketolase from Rhodopseudomonas palustris (strain ATCC BAA-98 / CGA009).